The sequence spans 657 residues: Glycogen debranching enzyme (657 aa).

D336 acts as the Nucleophile in catalysis. E371 acts as the Proton donor in catalysis. The span at 458–467 shows a compositional bias: basic and acidic residues; the sequence is NEANGEENRD. The tract at residues 458–479 is disordered; that stretch reads NEANGEENRDGTNNNYSNNHGK.

Belongs to the glycosyl hydrolase 13 family.

It carries out the reaction Hydrolysis of (1-&gt;6)-alpha-D-glucosidic linkages to branches with degrees of polymerization of three or four glucose residues in limit dextrin.. The protein operates within glycan degradation; glycogen degradation. Functionally, removes maltotriose and maltotetraose chains that are attached by 1,6-alpha-linkage to the limit dextrin main chain, generating a debranched limit dextrin. This is Glycogen debranching enzyme from Shigella boydii serotype 18 (strain CDC 3083-94 / BS512).